Here is a 300-residue protein sequence, read N- to C-terminus: Protoheme IX farnesyltransferase (300 aa).

The next 9 helical transmembrane spans lie at 24–44 (VTQL…PGMV), 48–68 (VLLG…AINC), 94–114 (LQIL…LYTF), 118–138 (LTMW…TLLL), 146–166 (IVIG…AVTG), 172–192 (AWIL…VLAL), 217–237 (LHIL…FISG), 239–259 (SGAV…AYAW), and 278–298 (IVYL…RPVI).

Belongs to the UbiA prenyltransferase family. Protoheme IX farnesyltransferase subfamily.

The protein localises to the cell inner membrane. It carries out the reaction heme b + (2E,6E)-farnesyl diphosphate + H2O = Fe(II)-heme o + diphosphate. Its pathway is porphyrin-containing compound metabolism; heme O biosynthesis; heme O from protoheme: step 1/1. Converts heme B (protoheme IX) to heme O by substitution of the vinyl group on carbon 2 of heme B porphyrin ring with a hydroxyethyl farnesyl side group. In Burkholderia pseudomallei (strain 1106a), this protein is Protoheme IX farnesyltransferase.